Reading from the N-terminus, the 200-residue chain is ATP synthase subunit s, mitochondrial (200 aa).

The N-terminal 25 residues, 1-25 (MMMFGKISRQLFSLKKIPWSCDSRY), are a transit peptide targeting the mitochondrion. Residues 1–61 (MMMFGKISRQ…SEWLLRCGAK (61 aa)) are N-terminal domain. Mg(2+) is bound at residue Gly59. 4 LRR repeats span residues 62 to 87 (VRYCGHQKWLQDYNKLPGGSVDRYKI), 88 to 116 (QAIDATDSCIMDIGFDHLVGLEHVERITL), 117 to 141 (CRCHYIEDNCLQRLSQLENLRKSLL), and 142 to 173 (ELEIIACGNVTDNGVIALRHFKNLKYLFLSDL). Residue Thr93 participates in Mg(2+) binding.

Belongs to the ATP synthase subunit s family. Homotetramer. Associates with ATP synthase.

It is found in the mitochondrion. Its subcellular location is the mitochondrion inner membrane. Its function is as follows. Involved in regulation of mitochondrial membrane ATP synthase. Necessary for H(+) conduction of ATP synthase. Facilitates energy-driven catalysis of ATP synthesis by blocking a proton leak through an alternative proton exit pathway. The sequence is that of ATP synthase subunit s, mitochondrial from Rattus norvegicus (Rat).